The sequence spans 269 residues: 5'-nucleotidase SurE (269 aa).

A divalent metal cation-binding residues include Asp11, Asp12, Ser43, and Asn101.

Belongs to the SurE nucleotidase family. A divalent metal cation is required as a cofactor.

It localises to the cytoplasm. It catalyses the reaction a ribonucleoside 5'-phosphate + H2O = a ribonucleoside + phosphate. Functionally, nucleotidase that shows phosphatase activity on nucleoside 5'-monophosphates. In Synechococcus sp. (strain CC9902), this protein is 5'-nucleotidase SurE.